Reading from the N-terminus, the 198-residue chain is HTH-type transcriptional regulator BetI (198 aa).

The HTH tetR-type domain occupies 8–68 (PIRRQQLIDA…ATMRYLISHL (61 aa)). A DNA-binding region (H-T-H motif) is located at residues 31–50 (TIAQIARRAGVSNGIISHYF).

It functions in the pathway amine and polyamine biosynthesis; betaine biosynthesis via choline pathway [regulation]. In terms of biological role, repressor involved in the biosynthesis of the osmoprotectant glycine betaine. It represses transcription of the choline transporter BetT and the genes of BetAB involved in the synthesis of glycine betaine. The chain is HTH-type transcriptional regulator BetI from Serratia proteamaculans (strain 568).